A 405-amino-acid polypeptide reads, in one-letter code: Argininosuccinate synthase (405 aa).

ATP contacts are provided by residues 10 to 18 and A37; that span reads AYSGGLDTS. Positions 88 and 93 each coordinate L-citrulline. G118 serves as a coordination point for ATP. L-aspartate is bound by residues T120, N124, and D125. N124 provides a ligand contact to L-citrulline. L-citrulline contacts are provided by R128, S179, S188, E264, and Y276.

Belongs to the argininosuccinate synthase family. Type 1 subfamily. Homotetramer.

It is found in the cytoplasm. The catalysed reaction is L-citrulline + L-aspartate + ATP = 2-(N(omega)-L-arginino)succinate + AMP + diphosphate + H(+). It participates in amino-acid biosynthesis; L-arginine biosynthesis; L-arginine from L-ornithine and carbamoyl phosphate: step 2/3. The chain is Argininosuccinate synthase from Pseudomonas savastanoi pv. phaseolicola (strain 1448A / Race 6) (Pseudomonas syringae pv. phaseolicola (strain 1448A / Race 6)).